The sequence spans 2169 residues: Protein sidekick-1 (2169 aa).

An N-terminal signal peptide occupies residues 1-50 (MVGRKVDREIIARRNSRRDGMMMKLNFCFFFCRRWWAFLLLQLHMLQALA). Residues 51–1961 (QDDVAPYFKT…TEAPFYEEWW (1911 aa)) are Extracellular-facing. Ig-like C2-type domains follow at residues 56-138 (PYFK…SEVQ), 143-229 (GNFM…SPLI), 245-333 (PIIV…AFIS), 338-428 (PYFT…LDVT), and 432-521 (PAFI…VMLT). Residues Cys78 and Cys121 are joined by a disulfide bond. N-linked (GlcNAc...) asparagine glycans are attached at residues Asn93, Asn223, and Asn253. Cystine bridges form between Cys267–Cys314, Cys360–Cys410, and Cys453–Cys505. N-linked (GlcNAc...) asparagine glycosylation is found at Asn502, Asn524, and Asn534. The 91-residue stretch at 525–615 (RTFIVHPPEN…GNDSRMARLE (91 aa)) folds into the Ig-like C2-type 6 domain. A disulfide bond links Cys547 and Cys599. Asn607, Asn631, Asn734, Asn773, Asn834, Asn967, and Asn977 each carry an N-linked (GlcNAc...) asparagine glycan. 13 consecutive Fibronectin type-III domains span residues 622–718 (SPQN…LPEE), 723–819 (PPKN…TLQG), 824–922 (PPQN…TLED), 926–1020 (AVGH…VPPE), 1024–1123 (APSN…TLQA), 1128–1226 (APGS…TRES), 1231–1328 (PPEN…TKDD), 1332–1426 (PPIR…TEKR), 1431–1528 (PPQQ…TLQD), 1533–1651 (PPSS…VGEA), 1656–1752 (APQN…THQA), 1756–1851 (APSF…AGPA), and 1854–1955 (SPGS…TEAP). Residues Asn1234 and Asn1285 are each glycosylated (N-linked (GlcNAc...) asparagine). The tract at residues 1423–1443 (TEKRERPAPPQQLTTPQSDVS) is disordered. The span at 1433–1443 (QQLTTPQSDVS) shows a compositional bias: polar residues. N-linked (GlcNAc...) asparagine glycosylation is found at Asn1606, Asn1700, Asn1719, Asn1771, and Asn1845. Residues 1962 to 1982 (FLLVMALSSLILILLVVFALV) form a helical membrane-spanning segment. The Cytoplasmic segment spans residues 1983–2169 (LHGQSKKYKN…TPVTGFSSFV (187 aa)). Disordered stretches follow at residues 2028–2050 (TFSKKNGTRSPPRPSPGGLHYSD) and 2145–2169 (GGVYTPTGQPAPGSRTPVTGFSSFV). Polar residues predominate over residues 2160–2169 (TPVTGFSSFV). The PDZ-binding motif lies at 2163-2169 (TGFSSFV).

This sequence belongs to the sidekick family. Homodimer; mediates homophilic interactions to promote cell adhesion. In terms of tissue distribution, expressed by non-overlapping subsets of retinal neurons. SDK1, SDK2, DSCAM and DSCAML1 are expressed in non-overlapping subsets of interneurons and retinal ganglion cells (RGCs) that form synapses in distinct inner plexiform layer (IPL) sublaminae.

Its subcellular location is the cell membrane. The protein resides in the synapse. Functionally, adhesion molecule that promotes lamina-specific synaptic connections in the retina. Expressed in specific subsets of interneurons and retinal ganglion cells (RGCs) and promotes synaptic connectivity via homophilic interactions. The polypeptide is Protein sidekick-1 (Gallus gallus (Chicken)).